A 452-amino-acid polypeptide reads, in one-letter code: tRNA modification GTPase MnmE (452 aa).

Arg21, Glu78, and Lys118 together coordinate (6S)-5-formyl-5,6,7,8-tetrahydrofolate. The TrmE-type G domain maps to 214 to 375 (GMKVVIAGRP…LREHLKQSMG (162 aa)). Asn224 is a binding site for K(+). GTP is bound by residues 224 to 229 (NAGKSS), 243 to 249 (TDIAGTT), 268 to 271 (DTAG), and 333 to 336 (NKAD). Ser228 lines the Mg(2+) pocket. Positions 243, 245, and 248 each coordinate K(+). Residue Thr249 participates in Mg(2+) binding. A (6S)-5-formyl-5,6,7,8-tetrahydrofolate-binding site is contributed by Lys452.

Belongs to the TRAFAC class TrmE-Era-EngA-EngB-Septin-like GTPase superfamily. TrmE GTPase family. As to quaternary structure, homodimer. Heterotetramer of two MnmE and two MnmG subunits. K(+) is required as a cofactor.

The protein localises to the cytoplasm. In terms of biological role, exhibits a very high intrinsic GTPase hydrolysis rate. Involved in the addition of a carboxymethylaminomethyl (cmnm) group at the wobble position (U34) of certain tRNAs, forming tRNA-cmnm(5)s(2)U34. The sequence is that of tRNA modification GTPase MnmE from Pasteurella multocida (strain Pm70).